The sequence spans 465 residues: Pleckstrin homology domain-containing family S member 1 (465 aa).

The PH domain maps to 14-129; sequence EVCKQDYFIK…WVSFMSSFRQ (116 aa). The segment covering 159–173 has biased composition (polar residues); sequence PSSTSEAVGSSSPRN. Disordered regions lie at residues 159 to 179 and 258 to 283; these read PSSTSEAVGSSSPRNGLQDKH and ETSHESVDSSKEEPQTLPETQDGDLH. Positions 258-271 are enriched in basic and acidic residues; sequence ETSHESVDSSKEEP.

The polypeptide is Pleckstrin homology domain-containing family S member 1 (Homo sapiens (Human)).